Here is a 414-residue protein sequence, read N- to C-terminus: uncharacterized protein (414 aa).

It belongs to the UbiH/COQ6 family. FAD serves as cofactor.

This is an uncharacterized protein from Synechocystis sp. (strain ATCC 27184 / PCC 6803 / Kazusa).